Consider the following 561-residue polypeptide: Long-chain-fatty-acid--CoA ligase (561 aa).

213–224 (YTGGTTGVAKGA) provides a ligand contact to ATP.

This sequence belongs to the ATP-dependent AMP-binding enzyme family. Mg(2+) is required as a cofactor.

It localises to the membrane. The enzyme catalyses a long-chain fatty acid + ATP + CoA = a long-chain fatty acyl-CoA + AMP + diphosphate. The protein operates within lipid metabolism; fatty acid beta-oxidation. In terms of biological role, catalyzes the esterification, concomitant with transport, of exogenous long-chain fatty acids into metabolically active CoA thioesters for subsequent degradation or incorporation into phospholipids. The protein is Long-chain-fatty-acid--CoA ligase (fadD) of Escherichia coli O157:H7.